The primary structure comprises 877 residues: Leucine--tRNA ligase (877 aa).

Positions 48–58 (PYPSGKLHMGH) match the 'HIGH' region motif. The 'KMSKS' region motif lies at 636-640 (KMSKS). Lysine 639 serves as a coordination point for ATP.

Belongs to the class-I aminoacyl-tRNA synthetase family.

Its subcellular location is the cytoplasm. The enzyme catalyses tRNA(Leu) + L-leucine + ATP = L-leucyl-tRNA(Leu) + AMP + diphosphate. The sequence is that of Leucine--tRNA ligase from Ralstonia pickettii (strain 12J).